Reading from the N-terminus, the 485-residue chain is Ribosomal protein uS12 methylthiotransferase RimO (485 aa).

Positions 19-135 (VKVGFISLGC…IGEVVAGILA (117 aa)) constitute an MTTase N-terminal domain. [4Fe-4S] cluster contacts are provided by cysteine 28, cysteine 64, cysteine 98, cysteine 172, cysteine 176, and cysteine 179. A Radical SAM core domain is found at 158-387 (ATPGYTAYLK…MEVQQEIARR (230 aa)). The TRAM domain maps to 390–461 (QLQVGRELEV…DYDLLGEATE (72 aa)).

It belongs to the methylthiotransferase family. RimO subfamily. [4Fe-4S] cluster is required as a cofactor.

It localises to the cytoplasm. It catalyses the reaction L-aspartate(89)-[ribosomal protein uS12]-hydrogen + (sulfur carrier)-SH + AH2 + 2 S-adenosyl-L-methionine = 3-methylsulfanyl-L-aspartate(89)-[ribosomal protein uS12]-hydrogen + (sulfur carrier)-H + 5'-deoxyadenosine + L-methionine + A + S-adenosyl-L-homocysteine + 2 H(+). In terms of biological role, catalyzes the methylthiolation of an aspartic acid residue of ribosomal protein uS12. In Symbiobacterium thermophilum (strain DSM 24528 / JCM 14929 / IAM 14863 / T), this protein is Ribosomal protein uS12 methylthiotransferase RimO.